The chain runs to 203 residues: Outer-membrane lipoprotein carrier protein (203 aa).

A signal peptide spans 1–21; it reads MKKMAIACALLSSVVASSVWA. The interval 178 to 203 is disordered; it reads QQNGAVDPSKFTFTPPQGVTIDDQRK.

It belongs to the LolA family. Monomer.

It is found in the periplasm. Its function is as follows. Participates in the translocation of lipoproteins from the inner membrane to the outer membrane. Only forms a complex with a lipoprotein if the residue after the N-terminal Cys is not an aspartate (The Asp acts as a targeting signal to indicate that the lipoprotein should stay in the inner membrane). The chain is Outer-membrane lipoprotein carrier protein from Salmonella paratyphi A (strain ATCC 9150 / SARB42).